The primary structure comprises 438 residues: Acid phosphatase type 7 (438 aa).

A signal peptide spans 1–23 (MSPFLGGWLFFCMLLPFSPGVQG). Asp-141, Asp-170, and Tyr-173 together coordinate Fe cation. Zn(2+) is bound at residue Asp-170. Residue Asn-205 participates in Zn(2+) binding. An N-linked (GlcNAc...) asparagine glycan is attached at Asn-211. Positions 286 and 333 each coordinate Zn(2+). Position 335 (His-335) interacts with Fe cation. Residues Asn-350 and Asn-404 are each glycosylated (N-linked (GlcNAc...) asparagine).

It belongs to the metallophosphoesterase superfamily. Purple acid phosphatase family. The cofactor is Fe cation. Zn(2+) is required as a cofactor.

The protein localises to the secreted. The enzyme catalyses a phosphate monoester + H2O = an alcohol + phosphate. The protein is Acid phosphatase type 7 of Mus musculus (Mouse).